Consider the following 246-residue polypeptide: Bis(5'-nucleosyl)-tetraphosphatase PrpE [asymmetrical] (246 aa).

It belongs to the PrpE family. Ni(2+) is required as a cofactor.

It carries out the reaction P(1),P(4)-bis(5'-guanosyl) tetraphosphate + H2O = GMP + GTP + 2 H(+). Its function is as follows. Asymmetrically hydrolyzes Ap4p to yield AMP and ATP. This chain is Bis(5'-nucleosyl)-tetraphosphatase PrpE [asymmetrical], found in Bacillus thuringiensis subsp. konkukian (strain 97-27).